A 432-amino-acid chain; its full sequence is Short/branched chain specific acyl-CoA dehydrogenase, mitochondrial (432 aa).

A mitochondrion-targeting transit peptide spans 1-33 (MERATVRLLRGGALLRRNFPSCLSSWKTPPHAL). K70 is modified (N6-acetyllysine; alternate). K70 is subject to N6-succinyllysine; alternate. Residues 174-183 (ICISETGAGS) and 207-209 (WIS) contribute to the FAD site. S183 provides a ligand contact to substrate. Phosphoserine is present on S183. Substrate contacts are provided by Y229 and Y283. K284 is modified (N6-acetyllysine; alternate). Position 284 is an N6-succinyllysine; alternate (K284). Residue 291–294 (NEGR) participates in substrate binding. FAD contacts are provided by residues R319, Q330, and 387-391 (EWMGG). The active-site Proton acceptor is the E414. 416–418 (TSN) is a binding site for FAD. Residue K426 is modified to N6-acetyllysine.

It belongs to the acyl-CoA dehydrogenase family. In terms of assembly, homotetramer. The cofactor is FAD.

The protein localises to the mitochondrion matrix. It catalyses the reaction 2-methylbutanoyl-CoA + oxidized [electron-transfer flavoprotein] + H(+) = (2E)-2-methylbut-2-enoyl-CoA + reduced [electron-transfer flavoprotein]. The enzyme catalyses (2S)-2-methylbutanoyl-CoA + oxidized [electron-transfer flavoprotein] + H(+) = (2E)-2-methylbut-2-enoyl-CoA + reduced [electron-transfer flavoprotein]. The catalysed reaction is (2R)-2-methylbutanoyl-CoA + oxidized [electron-transfer flavoprotein] + H(+) = ethylacryloyl-CoA + reduced [electron-transfer flavoprotein]. It carries out the reaction butanoyl-CoA + oxidized [electron-transfer flavoprotein] + H(+) = (2E)-butenoyl-CoA + reduced [electron-transfer flavoprotein]. It catalyses the reaction 2-methylpropanoyl-CoA + oxidized [electron-transfer flavoprotein] + H(+) = 2-methylpropenoyl-CoA + reduced [electron-transfer flavoprotein]. The enzyme catalyses hexanoyl-CoA + oxidized [electron-transfer flavoprotein] + H(+) = (2E)-hexenoyl-CoA + reduced [electron-transfer flavoprotein]. The catalysed reaction is valproyl-CoA + oxidized [electron-transfer flavoprotein] + H(+) = (2E)-2-propylpent-2-enoyl-CoA + reduced [electron-transfer flavoprotein]. Its pathway is lipid metabolism; mitochondrial fatty acid beta-oxidation. It functions in the pathway amino-acid degradation; L-isoleucine degradation. Functionally, short and branched chain specific acyl-CoA dehydrogenase that catalyzes the removal of one hydrogen from C-2 and C-3 of the fatty acyl-CoA thioester, resulting in the formation of trans-2-enoyl-CoA. Among the different mitochondrial acyl-CoA dehydrogenases, acts specifically on short and branched chain acyl-CoA derivatives such as (S)-2-methylbutyryl-CoA as well as short straight chain acyl-CoAs such as butyryl-CoA. Plays an important role in the metabolism of L-isoleucine by catalyzing the dehydrogenation of 2-methylbutyryl-CoA, one of the steps of the L-isoleucine catabolic pathway. Can also act on valproyl-CoA, a metabolite of the valproic acid drug. The chain is Short/branched chain specific acyl-CoA dehydrogenase, mitochondrial (ACADSB) from Bos taurus (Bovine).